The primary structure comprises 172 residues: Large ribosomal subunit protein uL10 (172 aa).

It belongs to the universal ribosomal protein uL10 family. In terms of assembly, part of the ribosomal stalk of the 50S ribosomal subunit. The N-terminus interacts with L11 and the large rRNA to form the base of the stalk. The C-terminus forms an elongated spine to which L12 dimers bind in a sequential fashion forming a multimeric L10(L12)X complex.

In terms of biological role, forms part of the ribosomal stalk, playing a central role in the interaction of the ribosome with GTP-bound translation factors. This Leifsonia xyli subsp. xyli (strain CTCB07) protein is Large ribosomal subunit protein uL10.